The following is a 405-amino-acid chain: Arginine biosynthesis bifunctional protein ArgJ, mitochondrial (405 aa).

The substrate site is built by threonine 174, lysine 200, threonine 211, and glutamate 300. Threonine 211 functions as the Nucleophile in the catalytic mechanism.

Belongs to the ArgJ family. As to quaternary structure, heterodimer of an alpha and a beta chain. Post-translationally, the alpha and beta chains are autoproteolytically processed from a single precursor protein within the mitochondrion.

It localises to the mitochondrion matrix. It carries out the reaction N(2)-acetyl-L-ornithine + L-glutamate = N-acetyl-L-glutamate + L-ornithine. The enzyme catalyses L-glutamate + acetyl-CoA = N-acetyl-L-glutamate + CoA + H(+). The protein operates within amino-acid biosynthesis; L-arginine biosynthesis; L-ornithine and N-acetyl-L-glutamate from L-glutamate and N(2)-acetyl-L-ornithine (cyclic): step 1/1. Its pathway is amino-acid biosynthesis; L-arginine biosynthesis; N(2)-acetyl-L-ornithine from L-glutamate: step 1/4. Its function is as follows. Catalyzes two activities which are involved in the cyclic version of arginine biosynthesis: the synthesis of acetylglutamate from glutamate and acetyl-CoA, and of ornithine by transacetylation between acetylornithine and glutamate. In Candida tropicalis (strain ATCC MYA-3404 / T1) (Yeast), this protein is Arginine biosynthesis bifunctional protein ArgJ, mitochondrial.